The following is a 273-amino-acid chain: Dermonecrotic toxin LapSicTox-alphaIB1aiii (273 aa).

Histidine 5 is a catalytic residue. Mg(2+) is bound by residues glutamate 25 and aspartate 27. Catalysis depends on histidine 41, which acts as the Nucleophile. Intrachain disulfides connect cysteine 45/cysteine 51 and cysteine 47/cysteine 190. A Mg(2+)-binding site is contributed by aspartate 85. Asparagine 250 carries N-linked (GlcNAc...) asparagine glycosylation.

This sequence belongs to the arthropod phospholipase D family. Class II subfamily. Mg(2+) is required as a cofactor. As to expression, expressed by the venom gland.

It is found in the secreted. It catalyses the reaction an N-(acyl)-sphingosylphosphocholine = an N-(acyl)-sphingosyl-1,3-cyclic phosphate + choline. It carries out the reaction an N-(acyl)-sphingosylphosphoethanolamine = an N-(acyl)-sphingosyl-1,3-cyclic phosphate + ethanolamine. The catalysed reaction is a 1-acyl-sn-glycero-3-phosphocholine = a 1-acyl-sn-glycero-2,3-cyclic phosphate + choline. The enzyme catalyses a 1-acyl-sn-glycero-3-phosphoethanolamine = a 1-acyl-sn-glycero-2,3-cyclic phosphate + ethanolamine. Functionally, dermonecrotic toxins cleave the phosphodiester linkage between the phosphate and headgroup of certain phospholipids (sphingolipid and lysolipid substrates), forming an alcohol (often choline) and a cyclic phosphate. This toxin acts on sphingomyelin (SM). It may also act on ceramide phosphoethanolamine (CPE), lysophosphatidylcholine (LPC) and lysophosphatidylethanolamine (LPE), but not on lysophosphatidylserine (LPS), and lysophosphatidylglycerol (LPG). It acts by transphosphatidylation, releasing exclusively cyclic phosphate products as second products. Induces dermonecrosis, hemolysis, increased vascular permeability, edema, inflammatory response, and platelet aggregation. The protein is Dermonecrotic toxin LapSicTox-alphaIB1aiii of Loxosceles apachea (Apache recluse spider).